Reading from the N-terminus, the 311-residue chain is Deacetoxycephalosporin C synthase (311 aa).

One can recognise a Fe2OG dioxygenase domain in the interval 154 to 267 (DCEPLLRFRY…RTSSVFFLRP (114 aa)).

This sequence belongs to the iron/ascorbate-dependent oxidoreductase family. It depends on Fe cation as a cofactor. L-ascorbate serves as cofactor.

It catalyses the reaction penicillin N + 2-oxoglutarate + O2 = deacetoxycephalosporin C + succinate + CO2 + H2O. The protein operates within antibiotic biosynthesis; cephalosporin C biosynthesis. Its function is as follows. Catalyzes the step from penicillin N to deacetoxy-cephalosporin C. The chain is Deacetoxycephalosporin C synthase (cefE) from Streptomyces clavuligerus.